The sequence spans 596 residues: Beta-glucuronidase (596 aa).

D-glucuronate-binding residues include aspartate 168 and asparagine 412. The Proton donor role is filled by glutamate 413. Residues asparagine 464, tyrosine 470, glutamate 502, tryptophan 547, and lysine 566 each contribute to the D-glucuronate site. Glutamate 502 acts as the Nucleophile in catalysis. Residues 564 to 566 (NKK) carry the N-K motif motif.

Belongs to the glycosyl hydrolase 2 family.

It localises to the cytoplasm. It catalyses the reaction a beta-D-glucuronoside + H2O = D-glucuronate + an alcohol. Functionally, displays beta-glucuronidase activity with the artificial substrate p-nitrophenyl-beta-D-glucuronide (PNPG). Is probably involved in the metabolism of oligosaccharides containing the 3-O-beta-D-glucopyranosyl-beta-D-glucuronide structure released from bacterial and plant acidic carbohydrates. The sequence is that of Beta-glucuronidase from Paenibacillus borealis.